The chain runs to 217 residues: 7-cyano-7-deazaguanine synthase (217 aa).

Position 10 to 20 (10 to 20) interacts with ATP; that stretch reads FSGGQDSTTCL. Cys-185, Cys-194, Cys-197, and Cys-200 together coordinate Zn(2+).

Belongs to the QueC family. In terms of assembly, homodimer. The cofactor is Zn(2+).

It catalyses the reaction 7-carboxy-7-deazaguanine + NH4(+) + ATP = 7-cyano-7-deazaguanine + ADP + phosphate + H2O + H(+). It functions in the pathway purine metabolism; 7-cyano-7-deazaguanine biosynthesis. Catalyzes the ATP-dependent conversion of 7-carboxy-7-deazaguanine (CDG) to 7-cyano-7-deazaguanine (preQ(0)). This is 7-cyano-7-deazaguanine synthase from Streptococcus thermophilus (strain CNRZ 1066).